The sequence spans 228 residues: Leucyl/phenylalanyl-tRNA--protein transferase (228 aa).

This sequence belongs to the L/F-transferase family.

The protein localises to the cytoplasm. The catalysed reaction is N-terminal L-lysyl-[protein] + L-leucyl-tRNA(Leu) = N-terminal L-leucyl-L-lysyl-[protein] + tRNA(Leu) + H(+). It carries out the reaction N-terminal L-arginyl-[protein] + L-leucyl-tRNA(Leu) = N-terminal L-leucyl-L-arginyl-[protein] + tRNA(Leu) + H(+). It catalyses the reaction L-phenylalanyl-tRNA(Phe) + an N-terminal L-alpha-aminoacyl-[protein] = an N-terminal L-phenylalanyl-L-alpha-aminoacyl-[protein] + tRNA(Phe). Functions in the N-end rule pathway of protein degradation where it conjugates Leu, Phe and, less efficiently, Met from aminoacyl-tRNAs to the N-termini of proteins containing an N-terminal arginine or lysine. The polypeptide is Leucyl/phenylalanyl-tRNA--protein transferase (Lawsonia intracellularis (strain PHE/MN1-00)).